Consider the following 264-residue polypeptide: tRNA pseudouridine synthase A (264 aa).

Aspartate 52 acts as the Nucleophile in catalysis. Tyrosine 110 contributes to the substrate binding site.

The protein belongs to the tRNA pseudouridine synthase TruA family. As to quaternary structure, homodimer.

It catalyses the reaction uridine(38/39/40) in tRNA = pseudouridine(38/39/40) in tRNA. In terms of biological role, formation of pseudouridine at positions 38, 39 and 40 in the anticodon stem and loop of transfer RNAs. The protein is tRNA pseudouridine synthase A of Wigglesworthia glossinidia brevipalpis.